The chain runs to 143 residues: Nucleoside diphosphate kinase (143 aa).

ATP contacts are provided by Lys11, Phe59, Arg87, Thr93, Arg104, and Asn114. The Pros-phosphohistidine intermediate role is filled by His117.

Belongs to the NDK family. As to quaternary structure, homotetramer. Mg(2+) serves as cofactor.

The protein localises to the cytoplasm. The catalysed reaction is a 2'-deoxyribonucleoside 5'-diphosphate + ATP = a 2'-deoxyribonucleoside 5'-triphosphate + ADP. The enzyme catalyses a ribonucleoside 5'-diphosphate + ATP = a ribonucleoside 5'-triphosphate + ADP. Its function is as follows. Major role in the synthesis of nucleoside triphosphates other than ATP. The ATP gamma phosphate is transferred to the NDP beta phosphate via a ping-pong mechanism, using a phosphorylated active-site intermediate. This Pseudoalteromonas translucida (strain TAC 125) protein is Nucleoside diphosphate kinase.